Here is a 303-residue protein sequence, read N- to C-terminus: MTRLRIDLAYDGGGFYGWAKQPNLRTVQGTIEDALHKVLRVPTDDAAEPLRLTVAGRTDTGVHASHQVAHLDVSDEVLNRCVGHMTIPVTEALTRRLKAVLPSDIVIHGIAVAPVGFDARFSALERTYVYRVADRSSEVDPRLRGCVLTVDEALDLELMNRAASLTIGLHDFGSFATPNPGGTTIREVKTAYWRRVPITPLVPDEMASHEAYRTPSLESGLVVFTIVADAFARNMVRSLVGSCIKVGSGRKSLEWFAGKMAEPVREGSSGPIAPQGLTLEHIAYPADDQLAARAEAIRAVRTL.

Catalysis depends on Asp59, which acts as the Nucleophile. Tyr128 provides a ligand contact to substrate.

This sequence belongs to the tRNA pseudouridine synthase TruA family. As to quaternary structure, homodimer.

The enzyme catalyses uridine(38/39/40) in tRNA = pseudouridine(38/39/40) in tRNA. Its function is as follows. Formation of pseudouridine at positions 38, 39 and 40 in the anticodon stem and loop of transfer RNAs. The chain is tRNA pseudouridine synthase A from Bifidobacterium longum (strain DJO10A).